We begin with the raw amino-acid sequence, 430 residues long: Enolase (430 aa).

Glutamine 163 contacts (2R)-2-phosphoglycerate. Glutamate 205 serves as the catalytic Proton donor. Residues aspartate 242, glutamate 286, and aspartate 313 each coordinate Mg(2+). (2R)-2-phosphoglycerate-binding residues include lysine 338, arginine 367, serine 368, and lysine 389. Residue lysine 338 is the Proton acceptor of the active site.

The protein belongs to the enolase family. The cofactor is Mg(2+).

Its subcellular location is the cytoplasm. It is found in the secreted. It localises to the cell surface. It catalyses the reaction (2R)-2-phosphoglycerate = phosphoenolpyruvate + H2O. The protein operates within carbohydrate degradation; glycolysis; pyruvate from D-glyceraldehyde 3-phosphate: step 4/5. Functionally, catalyzes the reversible conversion of 2-phosphoglycerate (2-PG) into phosphoenolpyruvate (PEP). It is essential for the degradation of carbohydrates via glycolysis. The sequence is that of Enolase from Symbiobacterium thermophilum (strain DSM 24528 / JCM 14929 / IAM 14863 / T).